The chain runs to 52 residues: Large ribosomal subunit protein bL32c (52 aa).

The protein belongs to the bacterial ribosomal protein bL32 family.

It localises to the plastid. The protein localises to the chloroplast. This is Large ribosomal subunit protein bL32c from Olimarabidopsis pumila (Dwarf rocket).